A 98-amino-acid polypeptide reads, in one-letter code: Protein S100-A11 (98 aa).

Thr5 bears the Phosphothreonine mark. EF-hand domains follow at residues 12-47 (LIAV…AFTK) and 50-85 (KDPG…LAIA). Lys22 is subject to N6-acetyllysine. The Ca(2+) site is built by Ser26, His28, Glu33, Asp63, Asn65, Asp67, Gln69, and Glu74.

This sequence belongs to the S-100 family. In terms of assembly, homodimer; disulfide-linked. Post-translationally, phosphorylation at Thr-5 significantly suppresses homodimerization and promotes association with NCL/nucleolin which induces nuclear translocation.

It is found in the cytoplasm. The protein resides in the nucleus. Its function is as follows. Facilitates the differentiation and the cornification of keratinocytes. This Rattus norvegicus (Rat) protein is Protein S100-A11 (S100a11).